A 250-amino-acid polypeptide reads, in one-letter code: Cell division protein ZapD (250 aa).

This sequence belongs to the ZapD family. In terms of assembly, interacts with FtsZ.

It is found in the cytoplasm. Cell division factor that enhances FtsZ-ring assembly. Directly interacts with FtsZ and promotes bundling of FtsZ protofilaments, with a reduction in FtsZ GTPase activity. This is Cell division protein ZapD from Pectobacterium carotovorum subsp. carotovorum (strain PC1).